Here is a 344-residue protein sequence, read N- to C-terminus: N-acetyl-gamma-glutamyl-phosphate reductase (344 aa).

Cys-148 is a catalytic residue.

Belongs to the NAGSA dehydrogenase family. Type 1 subfamily.

It localises to the cytoplasm. The catalysed reaction is N-acetyl-L-glutamate 5-semialdehyde + phosphate + NADP(+) = N-acetyl-L-glutamyl 5-phosphate + NADPH + H(+). The protein operates within amino-acid biosynthesis; L-arginine biosynthesis; N(2)-acetyl-L-ornithine from L-glutamate: step 3/4. Its function is as follows. Catalyzes the NADPH-dependent reduction of N-acetyl-5-glutamyl phosphate to yield N-acetyl-L-glutamate 5-semialdehyde. This is N-acetyl-gamma-glutamyl-phosphate reductase from Clostridium botulinum (strain Eklund 17B / Type B).